A 525-amino-acid chain; its full sequence is MKVLTTALLLVTLQCSHALSPTNCDASEPLAEKVLDLINKGRRSGYVFELLRVSDAHLDRAGTATVYYLALDVIESDCWVLSTKAQDDCLPSRWQSEIVIGQCKVIATRYSNESQDLSVNGYNCTTSSVSSALRNTKDSPVLLDFFEDSELYRKQARKALDKYKTDNGDFASFRVERAERVIRARGGERTNYYVEFSMRNCSTQHFPRSPLVFGFCRALLSYSIETSDLETPDSIDINCEVFNIEDHKDTSDMKPHWGHERPLCDKHLCKLSGSRDHHHTHKTDKLGCPPPPEGKDNSDRPRLQEGALPQLPPGYPPHSGANRTHRPSYNHSCNEHPCHGHRPHGHHPHSHHPPGHHSHGHHPHGHHPHSHHSHGHHPPGHHPHGHHPHGHHPHGHHPHGHHPHGHDFLDYGPCDPPSNSQELKGQYHRGYGPPHGHSRKRGPGKGLFPFHHQQIGYVYRLPPLNIGEVLTLPEANFPSFSLPNCNRSLQPEIQPFPQTASRSCPGKFESEFPQISKFFGYTPPK.

The N-terminal stretch at 1–18 is a signal peptide; that stretch reads MKVLTTALLLVTLQCSHA. A Cystatin 1 domain is found at 19–122; the sequence is LSPTNCDASE…ESQDLSVNGY (104 aa). 5 cysteine pairs are disulfide-bonded: C24-C504, C78-C89, C103-C124, C201-C414, and C216-C239. The interaction with ATP5F1A stretch occupies residues 41–84; that stretch reads GRRSGYVFELLRVSDAHLDRAGTATVYYLALDVIESDCWVLSTK. N112, N123, and N200 each carry an N-linked (GlcNAc...) asparagine glycan. Residues 135–240 form the Cystatin 2 domain; that stretch reads NTKDSPVLLD…TPDSIDINCE (106 aa). The disordered stretch occupies residues 273–447; that stretch reads GSRDHHHTHK…SRKRGPGKGL (175 aa). Positions 293-303 are enriched in basic and acidic residues; the sequence is EGKDNSDRPRL. Residues N322 and N330 are each glycosylated (N-linked (GlcNAc...) asparagine). A compositionally biased stretch (basic residues) spans 339–404; the sequence is HGHRPHGHHP…GHHPHGHHPH (66 aa). The segment at 345–379 is necessary for endothelial cell focal adhesions and anti-angiogenic activities; sequence GHHPHSHHPPGHHSHGHHPHGHHPHSHHSHGHHPP. The residue at position 438 (S438) is a Phosphoserine.

As to quaternary structure, interacts with THBS1 (via the TSP type I repeats); the interaction blocks the antiangiogenic effect of THBS1 with CD36. Interacts with HPSE; the interaction is enhanced at acidic pH, partially inhibits binding of HPSE to cell surface receptors and modulates its enzymatic activity. Interacts (via the HRR domain) with TMP1; the interaction partially mediates the antiangiogenic properties of HRG. Interacts with kappa and lambda light chains of IgG molecules. Interacts with ATP5F1A; the interaction occurs on the surface of T-cells and alters their cell morphology in concert with CONA. Binds IgG molecules containing kappa and lambda light chains and inhibits the formation of insoluble immunoglobulin complexes. Interacts with F12; the interaction, which is enhanced in the presence of zinc ions and inhibited by heparin-binding to HRG, inhibits factor XII autoactivation and contact-initiated coagulation. Interacts with PLG (via its Kringle domains); the interaction tethers PLG to the cell surface and enhances its activation. Interacts (via the HRR domain) with TPM1; the interaction appears to contribute to the antiangiogenic properties of the HRR domain. Interacts with THBS2; the interaction blocks the antiangiogenic effect of THBS2 with CD36. Zn(2+) serves as cofactor. In terms of processing, proteolytic cleavage produces several HRG fragments which are mostly disulfide-linked and, therefore, not released. Cleavage by plasmin is inhibited in the presence of heparin, zinc ions or in an acidic environment. Cleavage reduces binding of HRG to heparan sulfate, but enhances the ability of HRG to bind and tether plasminogen to the cell surface. On platelet activation, releases a 33 kDa antiangiogenic peptide which encompasses the HRR. Also cleaved in the C-terminal by plasmin. Post-translationally, N-glycosylated. Expressed in liver, blood plasma, serum and in platelets. Also present in fibrin clots, wound fluid from acute wounds and chronic leg ulcers.

It is found in the secreted. Functionally, plasma glycoprotein that binds a number of ligands such as heme, heparin, heparan sulfate, thrombospondin, plasminogen, and divalent metal ions. Binds heparin and heparin/glycosaminoglycans in a zinc-dependent manner. Binds heparan sulfate on the surface of liver, lung, kidney and heart endothelial cells. Binds to N-sulfated polysaccharide chains on the surface of liver endothelial cells. Inhibits rosette formation. Acts as an adapter protein and is implicated in regulating many processes such as immune complex and pathogen clearance, cell chemotaxis, cell adhesion, angiogenesis, coagulation and fibrinolysis. Mediates clearance of necrotic cells through enhancing the phagocytosis of necrotic cells in a heparan sulfate-dependent pathway. This process can be regulated by the presence of certain HRG ligands such as heparin and zinc ions. Binds to IgG subclasses of immunoglobins containing kappa and lambda light chains with different affinities regulating their clearance and inhibiting the formation of insoluble immune complexes. Tethers plasminogen to the cell surface. Binds T-cells and alters the cell morphology. Acts as a regulator of the vascular endothelial growth factor (VEGF) signaling pathway; inhibits endothelial cell motility by reducing VEGF-induced complex formation between PXN/paxillin and ILK/integrin-linked protein kinase and by promoting inhibition of VEGF-induced tyrosine phosphorylation of focal adhesion kinases and alpha-actinins in endothelial cells. Also plays a role in the regulation of tumor angiogenesis and tumor immune surveillance. Normalizes tumor vessels and promotes antitumor immunity by polarizing tumor-associated macrophages, leading to decreased tumor growth and metastasis. Modulates angiogenesis by blocking the CD6-mediated antiangiongenic effect of thrombospondins, THBS1 and THBS2. In Mus musculus (Mouse), this protein is Histidine-rich glycoprotein (Hrg).